We begin with the raw amino-acid sequence, 190 residues long: Guanylate kinase (190 aa).

One can recognise a Guanylate kinase-like domain in the interval 3–185; it reads NYIFIISAPS…SLEQLCKYFE (183 aa). Residue 10 to 17 participates in ATP binding; sequence APSGAGKS.

Belongs to the guanylate kinase family.

It is found in the cytoplasm. It catalyses the reaction GMP + ATP = GDP + ADP. Its function is as follows. Essential for recycling GMP and indirectly, cGMP. This is Guanylate kinase from Francisella tularensis subsp. holarctica (strain OSU18).